The following is a 335-amino-acid chain: uncharacterized protein (335 aa).

Residues 21–258 form the ABC transporter domain; it reads VMTSDLRKVY…QNTYHVQGQN (238 aa). 60 to 67 is a binding site for ATP; that stretch reads GPNGAGKT.

It belongs to the ABC transporter superfamily.

This is an uncharacterized protein from Nostoc sp. (strain PCC 7120 / SAG 25.82 / UTEX 2576).